Reading from the N-terminus, the 311-residue chain is 3-oxo-4,17-pregnadiene-20-carboxyl-CoA hydratase alpha subunit (311 aa).

Residues 198-295 (WDGVKAHELR…VAIGMPVRAT (98 aa)) are DUF35.

The protein belongs to the thioester dehydratase family. In terms of assembly, heterodimer composed of ChsH1 and ChsH2. Two heterodimers combine to form a heterotetramer. The complex interacts with Ltp2 via the DUF35 C-terminal region of ChsH2. The ChsH1-ChsH2-Ltp2 protein complex is composed of two protomers that form a heterohexameric structure through the Ltp2 dimerization interface.

The catalysed reaction is 3-oxochola-4,17-dien-22-oyl-CoA + H2O = 17-hydroxy-3-oxochol-4-en-22-oyl-CoA. The enzyme catalyses (2E)-octenoyl-CoA + H2O = 3-hydroxyoctanoyl-CoA. It carries out the reaction (2E)-decenoyl-CoA + H2O = 3-hydroxydecanoyl-CoA. Its pathway is steroid metabolism; cholesterol degradation. Its activity is regulated as follows. In the absence of the Ltp2 aldolase, ChsH1/ChsH2 can hydrate only about 30% of the 3-OPDC-CoA substrate. Complete turnover requires the presence of Ltp2. Functionally, involved in cholesterol side chain degradation. Catalyzes the hydration of 3-oxo-4,17-pregnadiene-20-carboxyl-CoA (3-OPDC-CoA) to form 17-hydroxy-3-oxo-4-pregnene-20-carboxyl-CoA (17-HOPC-CoA), in the modified beta-oxidation pathway for cholesterol side chain degradation. Can also use octenoyl-CoA and decenoyl-CoA, with lower efficiency. The polypeptide is 3-oxo-4,17-pregnadiene-20-carboxyl-CoA hydratase alpha subunit (Mycobacterium tuberculosis (strain ATCC 25618 / H37Rv)).